The following is a 1349-amino-acid chain: Serine/threonine-protein kinase GIN4 (1349 aa).

Low complexity predominate over residues methionine 1–asparagine 20. The tract at residues methionine 1–leucine 30 is disordered. Serine 10, serine 11, serine 12, and serine 15 each carry phosphoserine. One can recognise a Protein kinase domain in the interval tryptophan 28–leucine 288. Residues leucine 34–valine 42 and lysine 57 contribute to the ATP site. At threonine 69 the chain carries Phosphothreonine. Aspartate 158 functions as the Proton acceptor in the catalytic mechanism. Position 191 is a phosphothreonine (threonine 191). Phosphoserine is present on residues serine 294, serine 300, and serine 303. Disordered stretches follow at residues glutamine 366–proline 498 and serine 510–aspartate 532. Residues asparagine 369–lysine 384 show a composition bias toward low complexity. Residues serine 388, serine 390, and serine 393 each carry the phosphoserine modification. Threonine 397 is modified (phosphothreonine). Composition is skewed to polar residues over residues isoleucine 406–serine 418 and alanine 426–asparagine 442. Phosphoserine occurs at positions 407 and 409. Threonine 412 is subject to Phosphothreonine. Serine 413 is subject to Phosphoserine. Residues serine 443–tyrosine 470 are compositionally biased toward low complexity. A phosphoserine mark is found at serine 455, serine 469, serine 473, serine 477, and serine 485. The span at asparagine 471 to glutamine 488 shows a compositional bias: polar residues. The residue at position 556 (serine 556) is a Phosphoserine. A compositionally biased stretch (low complexity) spans arginine 570–lysine 585. Residues arginine 570–isoleucine 593 form a disordered region. Serine 634 is subject to Phosphoserine. Positions glutamate 661–isoleucine 701 form a coiled coil. The disordered stretch occupies residues lysine 712–lysine 737. Phosphoserine occurs at positions 720 and 746. The interval threonine 756–asparagine 798 is disordered. A phosphothreonine mark is found at threonine 778, threonine 869, and threonine 876. Residue serine 891 is modified to Phosphoserine. Residue threonine 941 is modified to Phosphothreonine. Position 973 is a phosphoserine (serine 973). 2 positions are modified to phosphothreonine: threonine 990 and threonine 992. Phosphoserine is present on serine 999. Residues arginine 1011–serine 1229 are disordered. The span at arginine 1024–arginine 1040 shows a compositional bias: polar residues. Over residues lysine 1044 to tyrosine 1053 the composition is skewed to basic and acidic residues. Threonine 1056 carries the phosphothreonine modification. Phosphoserine is present on residues serine 1059, serine 1074, serine 1077, serine 1078, serine 1080, and serine 1094. Positions valine 1083–serine 1094 are enriched in basic and acidic residues. Position 1095 is a phosphothreonine (threonine 1095). Phosphoserine is present on residues serine 1097 and serine 1098. Threonine 1106 carries the phosphothreonine modification. The span at isoleucine 1134–serine 1149 shows a compositional bias: polar residues. Serine 1154 carries the phosphoserine modification. Residues asparagine 1202–glutamine 1215 show a composition bias toward low complexity. A Phosphoserine modification is found at serine 1218.

It belongs to the protein kinase superfamily. CAMK Ser/Thr protein kinase family. NIM1 subfamily. Associates with the septin complex which consists of CDC3, CDC10, CDC11, CDC12, and SEP7. Post-translationally, hyperphosphorylated during mitosis at dozens of sites. Among these, 7 have perfect or minimal CDK consensus sites and are CDC28 targets.

It localises to the cytoplasm. It is found in the bud neck. The catalysed reaction is L-seryl-[protein] + ATP = O-phospho-L-seryl-[protein] + ADP + H(+). It catalyses the reaction L-threonyl-[protein] + ATP = O-phospho-L-threonyl-[protein] + ADP + H(+). Functionally, serine/threonine-protein kinase which regulates the localization and the function of the septins during mitosis. Involved in the formation of the septin ring but not the basal septin band. Phosphorylates septins CDC11 and SEP7. Required for the transition from pseudohyphae to hyphae. Acts upstream of IRS4 and INP51 in regulating cell wall integrity responses. Involved in propolis-induced cell death. The protein is Serine/threonine-protein kinase GIN4 (GIN4) of Candida albicans (strain SC5314 / ATCC MYA-2876) (Yeast).